The sequence spans 801 residues: Na(+)/H(+) antiporter subunit A1 (801 aa).

The next 19 helical transmembrane spans lie at 1-21 (MSLL…IPIL), 28-48 (IHLG…MLTL), 79-99 (LGLL…LYSI), 117-137 (LFMG…LYLF), 166-186 (LIIT…LAIP), 206-226 (PFFI…SAQF), 265-285 (IFAA…ITLF), 300-320 (ILAF…GIGA), 337-357 (FTAA…LFMI), 373-393 (LGGL…TALS), 427-447 (LGYL…VYSI), 472-492 (ILML…GLFP), 522-542 (GLTP…LLIV), 591-611 (LVII…SVPF), 623-643 (IFEV…LFAK), 646-666 (LFSI…FIFF), 671-691 (LALT…LCFY), 707-727 (LTNA…GLIA), and 764-784 (MDTL…YTMI).

The protein belongs to the CPA3 antiporters (TC 2.A.63) subunit A family. May form a heterooligomeric complex that consists of seven subunits: mnhA1, mnhB1, mnhC1, mnhD1, mnhE1, mnhF1 and mnhG1.

It is found in the cell membrane. Functionally, mnh complex is a Na(+)/H(+) antiporter involved in Na(+) excretion. This chain is Na(+)/H(+) antiporter subunit A1 (mnhA1), found in Staphylococcus aureus (strain Mu3 / ATCC 700698).